Consider the following 142-residue polypeptide: Large ribosomal subunit protein uL13 (142 aa).

The protein belongs to the universal ribosomal protein uL13 family. Part of the 50S ribosomal subunit.

Its function is as follows. This protein is one of the early assembly proteins of the 50S ribosomal subunit, although it is not seen to bind rRNA by itself. It is important during the early stages of 50S assembly. The polypeptide is Large ribosomal subunit protein uL13 (Histophilus somni (Haemophilus somnus)).